A 310-amino-acid polypeptide reads, in one-letter code: Methionyl-tRNA formyltransferase (310 aa).

111-114 (SLLP) contributes to the (6S)-5,6,7,8-tetrahydrofolate binding site.

This sequence belongs to the Fmt family.

It catalyses the reaction L-methionyl-tRNA(fMet) + (6R)-10-formyltetrahydrofolate = N-formyl-L-methionyl-tRNA(fMet) + (6S)-5,6,7,8-tetrahydrofolate + H(+). Functionally, attaches a formyl group to the free amino group of methionyl-tRNA(fMet). The formyl group appears to play a dual role in the initiator identity of N-formylmethionyl-tRNA by promoting its recognition by IF2 and preventing the misappropriation of this tRNA by the elongation apparatus. This is Methionyl-tRNA formyltransferase from Rhodopseudomonas palustris (strain BisB5).